The primary structure comprises 97 residues: Eclosion hormone (97 aa).

The N-terminal stretch at 1–17 (MNCKPLILCTFVAVAMC) is a signal peptide. 3 disulfide bridges follow: C48–C72, C52–C68, and C55–C83.

This sequence belongs to the insect eclosion hormone family. In terms of tissue distribution, expressed in a single pair of brain neurons which extend their processes the entire length of the central nervous system and also to the corpora cardiaca portion of the ring gland. These cells show massive depletion of immunoreactive Eh at ecdysis.

The protein resides in the secreted. In terms of biological role, neuropeptide that triggers the performance of ecdysis behaviors at the end of a molt. It triggers adult behavior patterns: larval, pupal and adult ecdysis, and plasticization during the molt. This is Eclosion hormone (Eh) from Drosophila melanogaster (Fruit fly).